An 86-amino-acid polypeptide reads, in one-letter code: Putative sodium channel toxin Ts17 (86 aa).

Positions 1 to 19 are cleaved as a signal peptide; sequence MNYFIFLVVACLLTAGTEG. One can recognise an LCN-type CS-alpha/beta domain in the interval 21–82; it reads KDGYPVEGDN…EPTKTSGRCK (62 aa). Disulfide bonds link Cys31–Cys81, Cys35–Cys57, Cys43–Cys64, and Cys47–Cys66. Pro83 is modified (proline amide).

The protein belongs to the long (4 C-C) scorpion toxin superfamily. Sodium channel inhibitor family. Alpha subfamily. As to expression, expressed by the venom gland.

It localises to the secreted. In terms of biological role, alpha toxins bind voltage-independently at site-3 of sodium channels (Nav) and inhibit the inactivation of the activated channels, thereby blocking neuronal transmission. This chain is Putative sodium channel toxin Ts17, found in Tityus serrulatus (Brazilian scorpion).